Consider the following 252-residue polypeptide: tRNA-cytidine(32) 2-sulfurtransferase (252 aa).

The short motif at 37–42 is the PP-loop motif element; that stretch reads SGGKDS. Cysteine 112, cysteine 115, and cysteine 202 together coordinate [4Fe-4S] cluster.

This sequence belongs to the TtcA family. In terms of assembly, homodimer. The cofactor is Mg(2+). [4Fe-4S] cluster is required as a cofactor.

The protein localises to the cytoplasm. The catalysed reaction is cytidine(32) in tRNA + S-sulfanyl-L-cysteinyl-[cysteine desulfurase] + AH2 + ATP = 2-thiocytidine(32) in tRNA + L-cysteinyl-[cysteine desulfurase] + A + AMP + diphosphate + H(+). It functions in the pathway tRNA modification. Catalyzes the ATP-dependent 2-thiolation of cytidine in position 32 of tRNA, to form 2-thiocytidine (s(2)C32). The sulfur atoms are provided by the cysteine/cysteine desulfurase (IscS) system. The polypeptide is tRNA-cytidine(32) 2-sulfurtransferase (Geotalea uraniireducens (strain Rf4) (Geobacter uraniireducens)).